Reading from the N-terminus, the 820-residue chain is G-type lectin S-receptor-like serine/threonine-protein kinase At1g11300 (820 aa).

The signal sequence occupies residues 1-26; that stretch reads MRLHESSSPFVCILVLSCFFLSVSLA. A Bulb-type lectin domain is found at 27–150; the sequence is QERAFFSGKL…SSDAYLWESF (124 aa). The Extracellular segment spans residues 27-436; sequence QERAFFSGKL…SEIKTKDKRP (410 aa). Residues Asn-37, Asn-58, Asn-87, Asn-115, Asn-123, Asn-173, Asn-211, Asn-247, Asn-256, and Asn-282 are each glycosylated (N-linked (GlcNAc...) asparagine). Residues 290–326 enclose the EGF-like; atypical domain; that stretch reads PATECDNYRRCGEFATCNPRKNPLCSCIRGFRPRNLI. 2 disulfide bridges follow: Cys-294/Cys-306 and Cys-300/Cys-314. N-linked (GlcNAc...) asparagine glycans are attached at residues Asn-332 and Asn-351. The 81-residue stretch at 345–425 folds into the PAN domain; sequence CERQNNNGSA…SGLDLYIRLA (81 aa). 2 disulfide bridges follow: Cys-379–Cys-400 and Cys-383–Cys-389. Asn-404 carries an N-linked (GlcNAc...) asparagine glycan. The helical transmembrane segment at 437–457 threads the bilayer; sequence ILIGTILAGGIFVVAACVLLA. The Cytoplasmic segment spans residues 458 to 820; the sequence is RRIVMKKRAK…NVTITDVTGR (363 aa). The region spanning 509 to 788 is the Protein kinase domain; sequence FSLRNKLGQG…DIPEPKQPAF (280 aa). ATP is bound by residues 515–523 and Lys-537; that span reads LGQGGFGPV. The segment at 598-615 is caM-binding; the sequence is RRAKLLDWKTRFNIINGI. The active-site Proton acceptor is the Asp-634.

This sequence belongs to the protein kinase superfamily. Ser/Thr protein kinase family.

It is found in the cell membrane. The enzyme catalyses L-seryl-[protein] + ATP = O-phospho-L-seryl-[protein] + ADP + H(+). It catalyses the reaction L-threonyl-[protein] + ATP = O-phospho-L-threonyl-[protein] + ADP + H(+). The protein is G-type lectin S-receptor-like serine/threonine-protein kinase At1g11300 of Arabidopsis thaliana (Mouse-ear cress).